The following is a 239-amino-acid chain: MFVSRLAASGLLLLALLAVSLDGKPVQQWSHKGWPPRPQIPPLVVQQWSQKPWPPGHHIPPVVVQEWPPGHHIPPLVVQQWSQKKWPPGHHIPPLVVQKWDPPPISPPLLKPHESPAGGTTALREELSLGPEAALDTPPAGPDVGPRGSKAPAAPHRLPKSKGASATSAASRPMRDLRTDGKQARQNWGRMMNPDHHAVGGGGGGGGARRLKGLAKKRVGDGCFGLKLDRIGSMSGLGC.

The N-terminal stretch at 1–23 (MFVSRLAASGLLLLALLAVSLDG) is a signal peptide. 2 propeptides span residues 24–33 (KPVQQWSHKG) and 43–49 (LVVQQWS). Q50 is modified (pyrrolidone carboxylic acid). A propeptide spanning residues 62-64 (VVV) is cleaved from the precursor. Q65 is modified (pyrrolidone carboxylic acid). Positions 76–82 (LVVQQWS) are excised as a propeptide. Q83 is modified (pyrrolidone carboxylic acid). A propeptide spanning residues 95 to 97 (LVV) is cleaved from the precursor. Residue Q98 is modified to Pyrrolidone carboxylic acid. 2 consecutive propeptides follow at residues 109–136 (LLKPHESPAGGTTALREELSLGPEAALD) and 148–217 (GSKA…LAKK). The segment at 132–205 (EAALDTPPAG…HHAVGGGGGG (74 aa)) is disordered. Residues 161-171 (SKGASATSAAS) are compositionally biased toward low complexity. Positions 173–183 (PMRDLRTDGKQ) are enriched in basic and acidic residues. A disulfide bridge connects residues C223 and C239.

The protein in the N-terminal section; belongs to the bradykinin-potentiating peptide family. In the central section; belongs to the bradykinin inhibitor peptide family. This sequence in the C-terminal section; belongs to the natriuretic peptide family. As to expression, expressed by the venom gland.

It is found in the secreted. In terms of biological role, bradykinin-potentiating peptides both inhibit the activity of the angiotensin-converting enzyme (ACE) and enhances the action of bradykinin by inhibiting the peptidases that inactivate it. They act as indirect hypotensive agent. Inhibits angiotensin-converting enzyme (ACE) activity (IC(50)=4.25 uM), preventing the release of angiotensin and thus indirectly contributing to hypotension. In vivo, induce hypotensive response in both normotensive and hypertensive rats. Its function is as follows. antagonizes the vasodilatory actions of bradykinin at the B2 bradykinin receptor (BDKRB2). Functionally, has a vasorelaxant activity in rat aortic strips and a diuretic potency in anesthetized rats. May act by activating natriuretic receptors (NPR1 and/or NPR2). This chain is Bradykinin-potentiating and C-type natriuretic peptides, found in Lachesis muta muta (Bushmaster).